A 287-amino-acid chain; its full sequence is Oxaloacetate decarboxylase (287 aa).

Position 50 (S50) interacts with substrate. D88 is a binding site for Mg(2+). R159 and H235 together coordinate substrate.

It belongs to the isocitrate lyase/PEP mutase superfamily. Oxaloacetate decarboxylase family. In terms of assembly, homotetramer; dimer of dimers. Mg(2+) is required as a cofactor.

The catalysed reaction is oxaloacetate + H(+) = pyruvate + CO2. In terms of biological role, catalyzes the decarboxylation of oxaloacetate into pyruvate. Seems to play a role in maintaining cellular concentrations of bicarbonate and pyruvate. This chain is Oxaloacetate decarboxylase, found in Pseudomonas paraeruginosa (strain DSM 24068 / PA7) (Pseudomonas aeruginosa (strain PA7)).